The chain runs to 650 residues: Glycoprotein 105 (650 aa).

The chain crosses the membrane as a helical; Signal-anchor for type II membrane protein span at residues 1–32; that stretch reads MATARLGVMRPPRSCALIFLCAFSMATAPTNA. Residues 33-650 are Virion surface-facing; sequence TAHRRAGTVK…RFPHVGIGSY (618 aa). 8 N-linked (GlcNAc...) asparagine; by host glycosylation sites follow: Asn52, Asn290, Asn332, Asn338, Asn359, Asn422, Asn516, and Asn552.

Associates with the gp82-gp105 complex. In terms of processing, N-Glycosylated.

It localises to the virion membrane. The sequence is that of Glycoprotein 105 (U96/U97/U98/U99/U100) from Homo sapiens (Human).